A 325-amino-acid chain; its full sequence is Cell division protein ZipA (325 aa).

At 1–5 (MQELR) the chain is on the periplasmic side. The chain crosses the membrane as a helical span at residues 6-26 (LVLILVGALAIAALLFHGLWT). Residues 27-325 (SRKETSSKFG…KQRVKVFCRK (299 aa)) lie on the Cytoplasmic side of the membrane.

This sequence belongs to the ZipA family. Interacts with FtsZ via their C-terminal domains.

It is found in the cell inner membrane. Essential cell division protein that stabilizes the FtsZ protofilaments by cross-linking them and that serves as a cytoplasmic membrane anchor for the Z ring. Also required for the recruitment to the septal ring of downstream cell division proteins. This chain is Cell division protein ZipA, found in Aliivibrio fischeri (strain MJ11) (Vibrio fischeri).